Here is a 439-residue protein sequence, read N- to C-terminus: Mitochondrial distribution and morphology protein 10 (439 aa).

Residues 275–305 (LPDATPPSFQVPSSSSSSSNPVSPSTSQPPT) are disordered. Over residues 280-305 (PPSFQVPSSSSSSSNPVSPSTSQPPT) the composition is skewed to low complexity.

This sequence belongs to the MDM10 family. As to quaternary structure, component of the ER-mitochondria encounter structure (ERMES) or MDM complex, composed of MMM1, MDM10, MDM12 and MDM34. Associates with the mitochondrial outer membrane sorting assembly machinery SAM(core) complex.

The protein localises to the mitochondrion outer membrane. Component of the ERMES/MDM complex, which serves as a molecular tether to connect the endoplasmic reticulum and mitochondria. Components of this complex are involved in the control of mitochondrial shape and protein biogenesis and may function in phospholipid exchange. MDM10 is involved in the late assembly steps of the general translocase of the mitochondrial outer membrane (TOM complex). Functions in the TOM40-specific route of the assembly of outer membrane beta-barrel proteins, including the association of TOM40 with the receptor TOM22 and small TOM proteins. Can associate with the SAM(core) complex as well as the MDM12-MMM1 complex, both involved in late steps of the major beta-barrel assembly pathway, that is responsible for biogenesis of all outer membrane beta-barrel proteins. May act as a switch that shuttles between both complexes and channels precursor proteins into the TOM40-specific pathway. Plays a role in mitochondrial morphology and in the inheritance of mitochondria. In Laccaria bicolor (strain S238N-H82 / ATCC MYA-4686) (Bicoloured deceiver), this protein is Mitochondrial distribution and morphology protein 10.